The following is a 374-amino-acid chain: MPLFATPFAQLDLVRQPEQDGEPLQAFDAADEYLLNQLHERGVTAQCRVLVLNDAFGALAASLAPHVQVTSSGDSHLGFLALRKNLARNGLDLGSVRFVPASETAVGPFDHVLVKVPKTLALLEEQLIRLHGQLAPGAQVVAAGMVKHLPRAAGDLLERYIGPMHASLAVKKARLLIAEAAERPQPRSPYPTRYRLEQPPLTLLNHANVFCREGLDIGTRAFLPHLPRSLGALRAADLGCGNGVLGIAYALLNPQAELALVDESYMAVQSARENWRAALGERPATFRADDGLAGQAAGSLDLVLCNPPFHQQQVVGDFLAWRMFLQARDALAAGGELWIVGNRHLGYHAKLKRLFRGVEQVAANPKFVILKAGK.

It belongs to the methyltransferase superfamily. RlmG family.

The protein resides in the cytoplasm. The enzyme catalyses guanosine(1835) in 23S rRNA + S-adenosyl-L-methionine = N(2)-methylguanosine(1835) in 23S rRNA + S-adenosyl-L-homocysteine + H(+). In terms of biological role, specifically methylates the guanine in position 1835 (m2G1835) of 23S rRNA. The chain is Ribosomal RNA large subunit methyltransferase G from Pseudomonas aeruginosa (strain ATCC 15692 / DSM 22644 / CIP 104116 / JCM 14847 / LMG 12228 / 1C / PRS 101 / PAO1).